The primary structure comprises 174 residues: Frataxin homolog, mitochondrial (174 aa).

The N-terminal 21 residues, 1–21 (MIKRSLASLVRVSSVMGRRYM), are a transit peptide targeting the mitochondrion.

It belongs to the frataxin family. Monomer. Forms a 24-mer complex made up of 8 copies of a trimeric subcomplex. Increments in mitochondrial iron uptake induce stepwise assembly of species ranging from trimers to 24-mers. Interacts with ISU1 with a 1 to 1 stoichiometry; the interaction is direct. Interacts with YHB1, SDH1, SDH2, AIM45 and CIR1. Processed in two steps by mitochondrial processing peptidase (MPP). MPP first cleaves the precursor to intermediate form and subsequently converts the intermediate to mature size protein.

It is found in the mitochondrion matrix. The catalysed reaction is 4 Fe(2+) + O2 + 4 H(+) = 4 Fe(3+) + 2 H2O. In terms of biological role, promotes the biosynthesis of heme as well as the assembly and repair of iron-sulfur clusters by delivering Fe(2+) to proteins involved in these pathways. Plays a role in the protection against iron-catalyzed oxidative stress through its ability to catalyze the oxidation of Fe(2+) to Fe(3+). Can store large amounts of the metal in the form of a ferrihydrite mineral by oligomerization. May be involved in regulation of the mitochondrial electron transport chain. In Saccharomyces cerevisiae (strain ATCC 204508 / S288c) (Baker's yeast), this protein is Frataxin homolog, mitochondrial.